The sequence spans 180 residues: Putative manganese efflux pump MntP (180 aa).

6 helical membrane passes run 6-26 (LFAL…GIGI), 34-54 (IALI…LGWY), 67-87 (ASIA…WDTI), 103-123 (GGLL…GFTL), 130-150 (LVLA…AGLT), and 159-179 (IGER…VKLF).

The protein belongs to the MntP (TC 9.B.29) family.

It localises to the cell membrane. Probably functions as a manganese efflux pump. This chain is Putative manganese efflux pump MntP, found in Desulforamulus reducens (strain ATCC BAA-1160 / DSM 100696 / MI-1) (Desulfotomaculum reducens).